The primary structure comprises 160 residues: Large ribosomal subunit protein eL21 (160 aa).

Basic and acidic residues-rich tracts occupy residues 112 to 123 (NDQKKKEAKEKG) and 136 to 145 (REAHFVRTNG). Positions 112–145 (NDQKKKEAKEKGTWVQLKRQPAPPREAHFVRTNG) are disordered.

This sequence belongs to the eukaryotic ribosomal protein eL21 family. As to quaternary structure, component of the large ribosomal subunit.

It localises to the cytoplasm. It is found in the cytosol. The protein localises to the endoplasmic reticulum. In terms of biological role, component of the large ribosomal subunit. The ribosome is a large ribonucleoprotein complex responsible for the synthesis of proteins in the cell. The chain is Large ribosomal subunit protein eL21 (RPL21) from Capra hircus (Goat).